The sequence spans 1217 residues: Sterol 3-beta-glucosyltransferase (1217 aa).

The region spanning 195–232 (EFVRKYFGISEEETLIGHYTGWLLQEVLIQGNLFITNS) is the GRAM 1 domain. The PH domain maps to 246-343 (AVVLCGKLKL…WVKCLKKQLF (98 aa)). The region spanning 590–656 (AKIKDWFNLH…EDIEGYNEIL (67 aa)) is the GRAM 2 domain. UDP-alpha-D-glucose contacts are provided by S766, R767, D769, N1042, I1072, H1074, H1087, S1090, G1091, T1092, D1111, and Q1112.

This sequence belongs to the glycosyltransferase 28 family.

Its subcellular location is the cytoplasm. The protein resides in the membrane. It catalyses the reaction a sterol + UDP-alpha-D-glucose = a sterol 3-beta-D-glucoside + UDP + H(+). The enzyme catalyses ergosterol + UDP-alpha-D-glucose = ergosteryl 3-beta-D-glucoside + UDP + H(+). In terms of biological role, sterol glycosyltransferase responsible for the glycosylation of ergosterol to form ergosterol-glucoside. This chain is Sterol 3-beta-glucosyltransferase, found in Vanderwaltozyma polyspora (strain ATCC 22028 / DSM 70294 / BCRC 21397 / CBS 2163 / NBRC 10782 / NRRL Y-8283 / UCD 57-17) (Kluyveromyces polysporus).